The sequence spans 428 residues: D-amino acid dehydrogenase (428 aa).

Residue 3–17 (VVILGSGVVGVASAY) participates in FAD binding.

Belongs to the DadA oxidoreductase family. Requires FAD as cofactor.

It carries out the reaction a D-alpha-amino acid + A + H2O = a 2-oxocarboxylate + AH2 + NH4(+). The protein operates within amino-acid degradation; D-alanine degradation; NH(3) and pyruvate from D-alanine: step 1/1. Functionally, oxidative deamination of D-amino acids. The chain is D-amino acid dehydrogenase from Burkholderia pseudomallei (strain 1106a).